We begin with the raw amino-acid sequence, 598 residues long: Nuclear receptor subfamily 4 group A member 2 (598 aa).

The segment at 1–22 (MPCVQAQYGSSPQGASPASQSY) is disordered. The span at 8–22 (YGSSPQGASPASQSY) shows a compositional bias: low complexity. Residues 260–335 (EGLCAVCGDN…VGMVKEVVRT (76 aa)) constitute a DNA-binding region (nuclear receptor). 2 NR C4-type zinc fingers span residues 263–283 (CAVC…CEGC) and 299–323 (CLAN…FQKC). The Bipartite nuclear localization signal (NLS1) motif lies at 287 to 314 (FKRTVQKNAKYVCLANKNCPVDKRRRNR). The tract at residues 337 to 361 (SLKGRRGRLPSKPKSPQEPSPPSPP) is disordered. Positions 338-350 (LKGRRGRLPSKPK) match the Nuclear localization signal (NLS1) motif. Over residues 352-361 (PQEPSPPSPP) the composition is skewed to pro residues. Residues 360-595 (PPVSLISALV…AIIDKLFLDT (236 aa)) form the NR LBD domain. The short motif at 443–452 (FLELFVLRLA) is the nuclear export sequence (NES1) element. The short motif at 568 to 577 (QGLQRIFYLK) is the nuclear export sequence (NES2) element.

Belongs to the nuclear hormone receptor family. NR4 subfamily. As to quaternary structure, interacts with SFPQ, NCOR2, SIN3A and HADC1. The interaction with NCOR2 increases in the absence of PITX3. Interacts with PER2. In terms of tissue distribution, expressed in a number of cell lines of T-cell, B-cell and fibroblast origin. Strong expression in brain tissue.

It localises to the cytoplasm. Its subcellular location is the nucleus. Functionally, transcriptional regulator which is important for the differentiation and maintenance of meso-diencephalic dopaminergic (mdDA) neurons during development. It is crucial for expression of a set of genes such as SLC6A3, SLC18A2, TH and DRD2 which are essential for development of mdDA neurons. The protein is Nuclear receptor subfamily 4 group A member 2 (NR4A2) of Homo sapiens (Human).